Here is a 589-residue protein sequence, read N- to C-terminus: Oligo-1,6-glucosidase IMA2 (589 aa).

Asp-215 serves as the catalytic Nucleophile. The active-site Proton donor is the Glu-277.

It belongs to the glycosyl hydrolase 13 family.

It carries out the reaction Hydrolysis of (1-&gt;6)-alpha-D-glucosidic linkages in some oligosaccharides produced from starch and glycogen by alpha-amylase, and in isomaltose.. Functionally, alpha-glucosidase with specificity for isomaltase, methyl-alpha-glucoside, and palatinose. The protein is Oligo-1,6-glucosidase IMA2 (IMA2) of Saccharomyces cerevisiae (strain ATCC 204508 / S288c) (Baker's yeast).